A 215-amino-acid chain; its full sequence is METQTVQQELESLPTTKMAQTNPMPGSVGPWKITIYDQENFQGKRMEFTSSCPNVSERNFDNVRSLKVECGAWVGYEHTSFCGQQFVLERGEYPRWDAWSGSNAYHIERLMSFRPICSANHKESKITIFEKENFIGRQWEICDDYPSLQAMGWPNNEVGSMKIQCGAWVCYQYPGYRGYQYILECDHHGGDYKHWREWGSHAQTSQIQSIRRIQQ.

Met1 is modified (N-acetylmethionine). A disordered region spans residues Met1 to Met24. The N-terminal arm stretch occupies residues Met1–Pro30. Glu2 is modified (N-acetylalanine). Beta/gamma crystallin 'Greek key' domains are found at residues Trp31–Cys70 and Gly71–Cys117. 2 positions are modified to S-glutathionyl cysteine; alternate: Cys82 and Cys117. S-methylcysteine; alternate is present on residues Cys82 and Cys117. The segment at Ser118 to Glu123 is connecting peptide. Beta/gamma crystallin 'Greek key' domains are found at residues Ser124 to Cys165 and Gly166 to Gln214.

Belongs to the beta/gamma-crystallin family. As to quaternary structure, homo/heterodimer, or complexes of higher-order. The structure of beta-crystallin oligomers seems to be stabilized through interactions between the N-terminal arms. Interacts with CRYBA1. In terms of processing, specific cleavages in the N-terminal arm occur during lens maturation and give rise to several truncated forms. Post-translationally, isoform A1 contains a N-acetylalanine at position 2.

Its function is as follows. Crystallins are the dominant structural components of the vertebrate eye lens. In Bos taurus (Bovine), this protein is Beta-crystallin A3.